We begin with the raw amino-acid sequence, 402 residues long: Acyl-[acyl-carrier-protein] desaturase 3, chloroplastic (402 aa).

Disordered stretches follow at residues 1-25 and 38-66; these read MSLT…GGAS and VGGI…THTL. The transit peptide at 1–32 directs the protein to the chloroplast; it reads MSLTGCLPPRPPCSMRRRTSGGGASVSPVVVM. Residues E139, E178, H181, E231, E264, and H267 each coordinate Fe cation.

It belongs to the fatty acid desaturase type 2 family. As to quaternary structure, homodimer. The cofactor is Fe(2+).

The protein resides in the plastid. It is found in the chloroplast. The protein operates within lipid metabolism; fatty acid metabolism. Introduces a cis double bond in the acyl chain of an acyl-[acyl-carrier protein]. This Oryza sativa subsp. indica (Rice) protein is Acyl-[acyl-carrier-protein] desaturase 3, chloroplastic.